The chain runs to 638 residues: MGKIENNERVILNVGGTRHETYRSTLKTLPGTRLALLASSEPQGDCLTAAGDKLQPLPPPLSPPPRPPPLSPVPSGCFEGGAGNCSSHGGNGSDHPGGGREFFFDRHPGVFAYVLNYYRTGKLHCPADVCGPLFEEELAFWGIDETDVEPCCWMTYRQHRDAEEALDIFETPDLIGGDPGDDEDLGGKRLGIEDAAGLGGPDGKSGRWRKLQPRMWALFEDPYSSRAARFIAFASLFFILVSITTFCLETHEAFNIVKNKTEPVINGTSAVLQYEIETDPALTYVEGVCVVWFTFEFLVRIVFSPNKLEFIKNLLNIIDFVAILPFYLEVGLSGLSSKAAKDVLGFLRVVRFVRILRIFKLTRHFVGLRVLGHTLRASTNEFLLLIIFLALGVLIFATMIYYAERVGAQPNDPSASEHTQFKNIPIGFWWAVVTMTTLGYGDMYPQTWSGMLVGALCALAGVLTIAMPVPVIVNNFGMYYSLAMAKQKLPRKRKKHIPPAPLASSPTFCKTELNMACNSTQSDTCLGKENRLLEHNRSVLSGDDSTGSEPPLSPPERLPIRRSSTRDKNRRGETCFLLTTGDYTCASDGGIRKGYEKSRSLNNIAGLAGNALRLSPVTSPYNSPCPLRRSRSPIPSIL.

Residues 1–229 (MGKIENNERV…EDPYSSRAAR (229 aa)) are Cytoplasmic-facing. The disordered stretch occupies residues 47–75 (LTAAGDKLQPLPPPLSPPPRPPPLSPVPS). Residues 56-72 (PLPPPLSPPPRPPPLSP) show a composition bias toward pro residues. Positions 124, 130, 151, and 152 each coordinate Zn(2+). A helical membrane pass occupies residues 230 to 248 (FIAFASLFFILVSITTFCL). 2 N-linked (GlcNAc...) asparagine glycosylation sites follow: Asn259 and Asn266. The chain crosses the membrane as a helical span at residues 284-303 (YVEGVCVVWFTFEFLVRIVF). The Cytoplasmic segment spans residues 304–314 (SPNKLEFIKNL). Residues 315–337 (LNIIDFVAILPFYLEVGLSGLSS) traverse the membrane as a helical segment. Residues 346–368 (FLRVVRFVRILRIFKLTRHFVGL) traverse the membrane as a helical; Voltage-sensor segment. Residues 369 to 381 (RVLGHTLRASTNE) are Cytoplasmic-facing. A helical membrane pass occupies residues 382-401 (FLLLIIFLALGVLIFATMIY). 4 residues coordinate K(+): Thr437, Leu438, Gly439, and Tyr440. Residues 437 to 442 (TLGYGD) carry the Selectivity filter motif. The helical transmembrane segment at 451-473 (MLVGALCALAGVLTIAMPVPVIV) threads the bilayer. Residues 474–638 (NNFGMYYSLA…RSRSPIPSIL (165 aa)) lie on the Cytoplasmic side of the membrane. The tract at residues 538–572 (SVLSGDDSTGSEPPLSPPERLPIRRSSTRDKNRRG) is disordered. A Phosphoserine; by PKA modification is found at Ser564. Residue Ser600 is modified to Phosphoserine.

The protein belongs to the potassium channel family. C (Shaw) (TC 1.A.1.2) subfamily. Kv3.2/KCNC2 sub-subfamily. In terms of assembly, homotetramer and heterotetramer with other channel-forming alpha subunits, such as KCNC1. Interacts with KCNC1. Homotetramer or heterotetramer channel activity is regulated by association with modulating ancillary subunits such as KCNE1, KCNE2 and KCNE3, creating a functionally diverse range of channel complexes. Interacts with KCNE1, KCNE2 and KCNE3. Post-translationally, phosphorylated by PKA in cortical synaptosomes. cAMP-dependent phosphorylation inhibits channel activity. Histamine H2 receptor- and PKA-induced phosphorylation extends action potential spike duration, reduces action potential spike amplitude, sustains maximum firing frequency in hippocampal interneurons; also reduces the incidence of high-frequency oscillations in hippocampal CA3 pyramidal cell layers. As to expression, expressed in neurons of the visual cortex during postnatal development. Expressed in neurons of the globus pallidus at postnatal age day 7 (P7), onward. Expressed in thalamic relay neurons. Expressed in neurons in layer IV and deeper cortical layers of the neocortex. Expressed in hippocampal interneurons. Expressed in nonpyramidal interneurons in the basolateral amygdala. Expressed in retinal ganglion cells (at protein level). Widely expressed in the brain. Expressed in numerous thalamic relay neurons throughout the dorsal thalamus. Expressed in interneurons of the deep layers V-VI of the cerebral cortex, the CA1 and CA3 pyramidal and dentate gyrus (DG) granule cells of the hippocampus, in neurons of the caudate-putamen, globus pallidus and subthalamic nucleus. Also expressed in the optic layer of interior colliculus, the inferior colliculus, the red nucleus, the medial geniculate, the ventral lateral lemiscus, the reticulotegmental nucleus and in the deep cerebellar nuclei. Expressed in globus pallidus (GP) neurons.

Its subcellular location is the cell membrane. The protein resides in the membrane. The protein localises to the perikaryon. It localises to the cell projection. It is found in the axon. Its subcellular location is the synapse. The protein resides in the synaptosome. The protein localises to the dendrite. It localises to the postsynaptic cell membrane. It is found in the presynaptic cell membrane. Its subcellular location is the apical cell membrane. The protein resides in the basolateral cell membrane. It catalyses the reaction K(+)(in) = K(+)(out). Its activity is regulated as follows. Inhibited by Stichodactyla helianthus peptide ShK. Inhibited by millimolar levels of tetraethylammonium (TEA). Contrary to other channels, inhibited only by millimolar levels of 4-aminopyridine (4-AP). In terms of biological role, voltage-gated potassium channel that mediates transmembrane potassium transport in excitable membranes, primarily in the brain. Contributes to the regulation of the fast action potential repolarization and in sustained high-frequency firing in neurons of the central nervous system. Homotetramer channels mediate delayed-rectifier voltage-dependent potassium currents that activate rapidly at high-threshold voltages and inactivate slowly. Forms tetrameric channels through which potassium ions pass in accordance with their electrochemical gradient. The channel alternates between opened and closed conformations in response to the voltage difference across the membrane. Can form functional homotetrameric channels and heterotetrameric channels that contain variable proportions of KCNC1, and possibly other family members as well; channel properties depend on the type of alpha subunits that are part of the channel. Channel properties may be modulated either by the association with ancillary subunits, such as KCNE1, KCNE2 and KCNE3 or indirectly by nitric oxide (NO) through a cGMP- and PKG-mediated signaling cascade, slowing channel activation and deactivation of delayed rectifier potassium channels. Contributes to fire sustained trains of very brief action potentials at high frequency in retinal ganglion cells, thalamocortical and suprachiasmatic nucleus (SCN) neurons and in hippocampal and neocortical interneurons. Sustained maximal action potential firing frequency in inhibitory hippocampal interneurons is negatively modulated by histamine H2 receptor activation in a cAMP- and protein kinase (PKA) phosphorylation-dependent manner. Plays a role in maintaining the fidelity of synaptic transmission in neocortical GABAergic interneurons by generating action potential (AP) repolarization at nerve terminals, thus reducing spike-evoked calcium influx and GABA neurotransmitter release. Required for long-range synchronization of gamma oscillations over distance in the neocortex. Contributes to the modulation of the circadian rhythm of spontaneous action potential firing in suprachiasmatic nucleus (SCN) neurons in a light-dependent manner. The polypeptide is Voltage-gated potassium channel KCNC2 (Rattus norvegicus (Rat)).